The sequence spans 526 residues: Neutrophil cytosol factor 2 (526 aa).

3 TPR repeats span residues S37 to L70, A71 to N104, and C121 to P154. T233 carries the phosphothreonine modification. One can recognise an SH3 1 domain in the interval L240 to L299. Over residues P303–S315 the composition is skewed to low complexity. The segment at P303 to L346 is disordered. Residues K336–K345 are compositionally biased toward basic and acidic residues. One can recognise a PB1 domain in the interval P351–T429. At S399 the chain carries Phosphoserine. Residues Q433–K458 form a disordered region. Positions D437–D446 are enriched in basic and acidic residues. The 60-residue stretch at K457–T516 folds into the SH3 2 domain.

This sequence belongs to the NCF2/NOXA1 family. Component of the phagocyte NADPH oxidase complex composed of an obligatory core heterodimer formed by the membrane proteins CYBA and CYBB and the cytosolic regulatory subunits NCF1/p47-phox, NCF2/p67-phox, NCF4/p40-phox and the small GTPase RAC1 or RAC2. Part of a cytosolic complex composed at least by NCF1, NCF2 and NCF4. Interacts with NCF4. Interacts (via the C-terminal SH3 domain) with NCF1 (via C-terminus). Interacts with SYTL1 and RAC1. May interact with NOXO1. Interacts with S100A8 and calprotectin (S100A8/9). Interacts with GBP7 (via GB1/RHD3-type G domain). Interacts with CYBB; the interaction is enhanced in the presence of GBP7.

The protein localises to the cytoplasm. Functionally, subunit of the phagocyte NADPH oxidase complex that mediates the transfer of electrons from cytosolic NADPH to O2 to produce the superoxide anion (O2(-)). In the activated complex, electrons are first transferred from NADPH to flavin adenine dinucleotide (FAD) and subsequently transferred via two heme molecules to molecular oxygen, producing superoxide through an outer-sphere reaction. Activation of the NADPH oxidase complex is initiated by the assembly of cytosolic subunits of the NADPH oxidase complex with the core NADPH oxidase complex to form a complex at the plasma membrane or phagosomal membrane. This activation process is initiated by phosphorylation dependent binding of the cytosolic NCF1/p47-phox subunit to the C-terminus of CYBA/p22-phox. This Homo sapiens (Human) protein is Neutrophil cytosol factor 2.